Here is a 155-residue protein sequence, read N- to C-terminus: D-aminoacyl-tRNA deacylase (155 aa).

The Gly-cisPro motif, important for rejection of L-amino acids motif lies at 137 to 138 (GP).

The protein belongs to the DTD family. Homodimer.

It localises to the cytoplasm. It carries out the reaction glycyl-tRNA(Ala) + H2O = tRNA(Ala) + glycine + H(+). It catalyses the reaction a D-aminoacyl-tRNA + H2O = a tRNA + a D-alpha-amino acid + H(+). In terms of biological role, an aminoacyl-tRNA editing enzyme that deacylates mischarged D-aminoacyl-tRNAs. Also deacylates mischarged glycyl-tRNA(Ala), protecting cells against glycine mischarging by AlaRS. Acts via tRNA-based rather than protein-based catalysis; rejects L-amino acids rather than detecting D-amino acids in the active site. By recycling D-aminoacyl-tRNA to D-amino acids and free tRNA molecules, this enzyme counteracts the toxicity associated with the formation of D-aminoacyl-tRNA entities in vivo and helps enforce protein L-homochirality. This Paracidovorax citrulli (strain AAC00-1) (Acidovorax citrulli) protein is D-aminoacyl-tRNA deacylase.